A 123-amino-acid chain; its full sequence is Small ribosomal subunit protein uS12 (123 aa).

The residue at position 89 (aspartate 89) is a 3-methylthioaspartic acid.

Belongs to the universal ribosomal protein uS12 family. Part of the 30S ribosomal subunit. Contacts proteins S8 and S17. May interact with IF1 in the 30S initiation complex.

Functionally, with S4 and S5 plays an important role in translational accuracy. In terms of biological role, interacts with and stabilizes bases of the 16S rRNA that are involved in tRNA selection in the A site and with the mRNA backbone. Located at the interface of the 30S and 50S subunits, it traverses the body of the 30S subunit contacting proteins on the other side and probably holding the rRNA structure together. The combined cluster of proteins S8, S12 and S17 appears to hold together the shoulder and platform of the 30S subunit. This chain is Small ribosomal subunit protein uS12, found in Phenylobacterium zucineum (strain HLK1).